Reading from the N-terminus, the 469-residue chain is Probable periplasmic serine endoprotease DegP-like (469 aa).

The signal sequence occupies residues 1–25 (MNRLLKQVCMVVVSSFMMASMLTHA). Active-site charge relay system residues include His114, Asp144, and Ser217. Substrate is bound by residues 215 to 217 (GNS) and 272 to 276 (LGVLI). PDZ domains are found at residues 261-352 (LKSD…YRDG) and 358-458 (SVTL…IRQG).

This sequence belongs to the peptidase S1C family.

It localises to the periplasm. It catalyses the reaction Acts on substrates that are at least partially unfolded. The cleavage site P1 residue is normally between a pair of hydrophobic residues, such as Val-|-Val.. In terms of biological role, might be efficient in the degradation of transiently denatured and unfolded proteins which accumulate in the periplasm following stress conditions. The polypeptide is Probable periplasmic serine endoprotease DegP-like (Marinomonas sp. (strain MWYL1)).